The sequence spans 200 residues: Probable molybdenum cofactor guanylyltransferase (200 aa).

GTP is bound by residues 9–11 (LAG), K21, D69, and D100. D100 contributes to the Mg(2+) binding site.

Belongs to the MobA family. Requires Mg(2+) as cofactor.

It localises to the cytoplasm. The enzyme catalyses Mo-molybdopterin + GTP + H(+) = Mo-molybdopterin guanine dinucleotide + diphosphate. In terms of biological role, transfers a GMP moiety from GTP to Mo-molybdopterin (Mo-MPT) cofactor (Moco or molybdenum cofactor) to form Mo-molybdopterin guanine dinucleotide (Mo-MGD) cofactor. The polypeptide is Probable molybdenum cofactor guanylyltransferase (Bacillus cereus (strain ATCC 10987 / NRS 248)).